The sequence spans 516 residues: Endo-acting ulvan lyase (516 aa).

Residues 1–24 form the signal peptide; the sequence is MLEKTTLKNIILIHFLMFLAVVTA. Cys-38 and Cys-65 are joined by a disulfide. The Ca(2+) site is built by Gly-42, Asn-44, Asp-62, Ser-64, Ala-67, and Asn-68. Tyr-138 is a binding site for substrate. Residue Lys-143 is the Proton acceptor of the active site. Substrate is bound by residues 191-195 and 260-263; these read EGDGR and YRVK. Catalysis depends on Tyr-260, which acts as the Proton donor/acceptor. The segment at 289 to 429 is ulvan-binding domain; it reads PIGDVYKLKN…VWKAIAVESL (141 aa). A propeptide spans 430 to 516 (removed by the type IX secretion system (T9SS)); the sequence is SVDENAILAS…NKYHKKLIVK (87 aa).

This sequence belongs to the polysaccharide lyase 28 family. Ca(2+) is required as a cofactor.

It is found in the secreted. Functionally, ulvan lyase involved in ulvan degradation. Ulvan is the main polysaccharide component of the Ulvales (green seaweed) cell wall. It is composed of disaccharide building blocks comprising 3-sulfated rhamnose (Rha3S) linked to D-glucuronic acid (GlcA), L-iduronic acid (IduA), or D-xylose (Xyl). Ulvan lyase catalyzes the endolytic cleavage of the glycosidic bond between Rha3S and the uronic acids GlcA or IduA, producing oligosaccharides that have unsaturated 4-deoxy-L-threo-hex-4-enopyranosiduronic acid (deltaUA) at the non-reducing end. This results eventually in the degradation of the ulvan polysaccharide into deltaUA-Rha3S disaccharides and deltaUA-Rha3S-Xyl-Rha3S tetrasaccharides. The sequence is that of Endo-acting ulvan lyase from Formosa agariphila (strain DSM 15362 / KCTC 12365 / LMG 23005 / KMM 3901 / M-2Alg 35-1).